Reading from the N-terminus, the 454-residue chain is Protein translocase subunit SecY (454 aa).

Helical transmembrane passes span 43–63 (LTIA…LPYI), 97–117 (FTLG…AFVI), 144–164 (TLLL…AFIF), 168–188 (ILKL…ILWI), 201–221 (SSFL…GMSF), 226–246 (IFSF…WAAI), 289–309 (PVVF…YILL), 334–354 (IVEA…IIDP), 390–410 (LIGA…GFVF), and 414–434 (IFKG…TEIL).

It belongs to the SecY/SEC61-alpha family. Component of the plastid Sec protein translocase complex, which is composed of at least SecY and SecE.

The protein localises to the plastid. It is found in the chloroplast thylakoid membrane. The central subunit of the protein translocation channel SecYE. Consists of two halves formed by TMs 1-5 and 6-10. These two domains form a lateral gate at the front which open onto the bilayer between TMs 2 and 7, and are clamped together by SecE at the back. The channel is closed by both a pore ring composed of hydrophobic SecY resides and a short helix (helix 2A) on the extracellular side of the membrane which forms a plug. The polypeptide is Protein translocase subunit SecY (Heterosigma akashiwo (strain NIES-293 / 8280G21-1)).